Consider the following 138-residue polypeptide: Large ribosomal subunit protein bL17 (138 aa).

This sequence belongs to the bacterial ribosomal protein bL17 family. In terms of assembly, part of the 50S ribosomal subunit. Contacts protein L32.

The chain is Large ribosomal subunit protein bL17 from Halorhodospira halophila (strain DSM 244 / SL1) (Ectothiorhodospira halophila (strain DSM 244 / SL1)).